Reading from the N-terminus, the 194-residue chain is Flagellar transcriptional regulator FlhC (194 aa).

The Zn(2+) site is built by C139, C142, C159, and C162.

Belongs to the FlhC family. Heterohexamer composed of two FlhC and four FlhD subunits. Each FlhC binds a FlhD dimer, forming a heterotrimer, and a hexamer assembles by dimerization of two heterotrimers. Zn(2+) serves as cofactor.

The protein localises to the cytoplasm. Its function is as follows. Functions in complex with FlhD as a master transcriptional regulator that regulates transcription of several flagellar and non-flagellar operons by binding to their promoter region. Activates expression of class 2 flagellar genes, including fliA, which is a flagellum-specific sigma factor that turns on the class 3 genes. Also regulates genes whose products function in a variety of physiological pathways. This chain is Flagellar transcriptional regulator FlhC, found in Xenorhabdus nematophila (Achromobacter nematophilus).